The chain runs to 320 residues: Cytochrome f (320 aa).

An N-terminal signal peptide occupies residues 1-35 (MQTRKTFSWIKEQIARSISVSLLIYIITRTSISSA). Tyr36, Cys56, Cys59, and His60 together coordinate heme. The chain crosses the membrane as a helical span at residues 286-306 (VQGLLFFLASVILAQIFLVLK).

Belongs to the cytochrome f family. In terms of assembly, the 4 large subunits of the cytochrome b6-f complex are cytochrome b6, subunit IV (17 kDa polypeptide, petD), cytochrome f and the Rieske protein, while the 4 small subunits are PetG, PetL, PetM and PetN. The complex functions as a dimer. Requires heme as cofactor.

The protein localises to the plastid. It is found in the chloroplast thylakoid membrane. Functionally, component of the cytochrome b6-f complex, which mediates electron transfer between photosystem II (PSII) and photosystem I (PSI), cyclic electron flow around PSI, and state transitions. This Jasminum nudiflorum (Winter jasmine) protein is Cytochrome f.